A 56-amino-acid polypeptide reads, in one-letter code: Large ribosomal subunit protein bL33 (56 aa).

The protein belongs to the bacterial ribosomal protein bL33 family.

This chain is Large ribosomal subunit protein bL33, found in Marinomonas sp. (strain MWYL1).